Consider the following 333-residue polypeptide: Uroporphyrinogen decarboxylase (333 aa).

Residues 21-25 (RQVGR), Asp-70, Tyr-139, Ser-194, and His-309 contribute to the substrate site.

The protein belongs to the uroporphyrinogen decarboxylase family. As to quaternary structure, homodimer.

It localises to the cytoplasm. It carries out the reaction uroporphyrinogen III + 4 H(+) = coproporphyrinogen III + 4 CO2. It participates in porphyrin-containing compound metabolism; protoporphyrin-IX biosynthesis; coproporphyrinogen-III from 5-aminolevulinate: step 4/4. Its function is as follows. Catalyzes the decarboxylation of four acetate groups of uroporphyrinogen-III to yield coproporphyrinogen-III. The chain is Uroporphyrinogen decarboxylase from Chlamydia caviae (strain ATCC VR-813 / DSM 19441 / 03DC25 / GPIC) (Chlamydophila caviae).